Here is a 454-residue protein sequence, read N- to C-terminus: Tumor necrosis factor receptor superfamily member 1A (454 aa).

The first 29 residues, 1 to 29, serve as a signal peptide directing secretion; it reads MGLPTVPGLLLSLVLLALLMGIHPSGVTG. The Extracellular segment spans residues 30–212; it reads LVPSLGDREK…VTNPQDSGTA (183 aa). 4 TNFR-Cys repeats span residues 43-82, 83-125, 126-166, and 167-196; these read LCPQ…TVCR, ECEK…DTVC, GCKE…NTVC, and NCHA…KLCL. Disulfide bonds link cysteine 44–cysteine 58, cysteine 59–cysteine 72, cysteine 62–cysteine 81, cysteine 84–cysteine 99, cysteine 102–cysteine 117, cysteine 105–cysteine 125, cysteine 127–cysteine 143, cysteine 146–cysteine 158, cysteine 149–cysteine 166, cysteine 168–cysteine 179, cysteine 182–cysteine 195, and cysteine 185–cysteine 191. N-linked (GlcNAc...) asparagine glycosylation occurs at asparagine 54. Asparagine 151 carries N-linked (GlcNAc...) asparagine glycosylation. Asparagine 202 carries an N-linked (GlcNAc...) asparagine glycan. Residues 213 to 235 traverse the membrane as a helical segment; it reads VLLPLVILLGLCLLSFIFISLMC. Over 236 to 454 the chain is Cytoplasmic; that stretch reads RYPRWRPEVY…APSSTTRLPR (219 aa). The tract at residues 339–349 is N-SMase activation domain (NSD); the sequence is VQKWEDSAHPQ. The Death domain occupies 356-441; sequence LAILYAVVDG…GCLENILEAL (86 aa). (Microbial infection) N-beta-linked (GlcNAc) arginine glycosylation occurs at arginine 376.

Binding of TNF to the extracellular domain leads to homotrimerization. The aggregated death domains provide a novel molecular interface that interacts specifically with the death domain of TRADD. Various TRADD-interacting proteins such as TRAFS, RIPK1 and possibly FADD, are recruited to the complex by their association with TRADD. This complex activates at least two distinct signaling cascades, apoptosis and NF-kappa-B signaling. Interacts with BAG4, BABAM2, FEM1B, GRB2, SQSTM1 and TRPC4AP. Interacts with DAB2IP. Interacts directly with NOL3 (via CARD domain); inhibits TNF-signaling pathway. Interacts with SH3RF2, TRADD and RIPK1. SH3RF2 facilitates the recruitment of RIPK1 and TRADD to TNFRSF1A in a TNF-alpha-dependent process. Interacts with PGLYRP1; this interaction is important for cell death induction. Interacts (via death domain) with MADD (via death domain). (Microbial infection) Glycosylated at Arg-376 by S.typhimurium protein Ssek3: arginine GlcNAcylation prevents homotypic/heterotypic death domain interactions.

Its subcellular location is the cell membrane. It localises to the golgi apparatus membrane. Receptor for TNFSF2/TNF-alpha and homotrimeric TNFSF1/lymphotoxin-alpha. The adapter molecule FADD recruits caspase-8 to the activated receptor. The resulting death-inducing signaling complex (DISC) performs caspase-8 proteolytic activation which initiates the subsequent cascade of caspases (aspartate-specific cysteine proteases) mediating apoptosis. The chain is Tumor necrosis factor receptor superfamily member 1A (Tnfrsf1a) from Mus musculus (Mouse).